The sequence spans 211 residues: Histidine biosynthesis bifunctional protein HisIE (211 aa).

Residues 1–107 are phosphoribosyl-AMP cyclohydrolase; it reads MNKLIDFSKG…FNSEIESRFK (107 aa). Residues 108–211 form a phosphoribosyl-ATP pyrophosphohydrolase region; sequence IQALAQTIHQ…KGERKEVREW (104 aa).

The protein in the N-terminal section; belongs to the PRA-CH family. This sequence in the C-terminal section; belongs to the PRA-PH family.

Its subcellular location is the cytoplasm. It carries out the reaction 1-(5-phospho-beta-D-ribosyl)-ATP + H2O = 1-(5-phospho-beta-D-ribosyl)-5'-AMP + diphosphate + H(+). It catalyses the reaction 1-(5-phospho-beta-D-ribosyl)-5'-AMP + H2O = 1-(5-phospho-beta-D-ribosyl)-5-[(5-phospho-beta-D-ribosylamino)methylideneamino]imidazole-4-carboxamide. Its pathway is amino-acid biosynthesis; L-histidine biosynthesis; L-histidine from 5-phospho-alpha-D-ribose 1-diphosphate: step 2/9. It participates in amino-acid biosynthesis; L-histidine biosynthesis; L-histidine from 5-phospho-alpha-D-ribose 1-diphosphate: step 3/9. This is Histidine biosynthesis bifunctional protein HisIE from Staphylococcus epidermidis (strain ATCC 35984 / DSM 28319 / BCRC 17069 / CCUG 31568 / BM 3577 / RP62A).